A 161-amino-acid chain; its full sequence is Methylated-DNA--protein-cysteine methyltransferase (161 aa).

Catalysis depends on C128, which acts as the Nucleophile; methyl group acceptor.

It belongs to the MGMT family.

Its subcellular location is the cytoplasm. It catalyses the reaction a 6-O-methyl-2'-deoxyguanosine in DNA + L-cysteinyl-[protein] = S-methyl-L-cysteinyl-[protein] + a 2'-deoxyguanosine in DNA. It carries out the reaction a 4-O-methyl-thymidine in DNA + L-cysteinyl-[protein] = a thymidine in DNA + S-methyl-L-cysteinyl-[protein]. Its function is as follows. Involved in the cellular defense against the biological effects of O6-methylguanine (O6-MeG) and O4-methylthymine (O4-MeT) in DNA. Repairs the methylated nucleobase in DNA by stoichiometrically transferring the methyl group to a cysteine residue in the enzyme. This is a suicide reaction: the enzyme is irreversibly inactivated. In Methanocaldococcus vulcanius (strain ATCC 700851 / DSM 12094 / M7) (Methanococcus vulcanius), this protein is Methylated-DNA--protein-cysteine methyltransferase.